The primary structure comprises 236 residues: Adenosine 5'-phosphosulfate reductase (236 aa).

Residues Cys-123, Cys-124, Cys-206, and Cys-209 each contribute to the [4Fe-4S] cluster site. The Nucleophile; cysteine thiosulfonate intermediate role is filled by Cys-232.

The protein belongs to the PAPS reductase family. CysH subfamily. [4Fe-4S] cluster serves as cofactor.

Its subcellular location is the cytoplasm. The enzyme catalyses [thioredoxin]-disulfide + sulfite + AMP + 2 H(+) = adenosine 5'-phosphosulfate + [thioredoxin]-dithiol. It functions in the pathway sulfur metabolism; hydrogen sulfide biosynthesis; sulfite from sulfate. Its function is as follows. Catalyzes the formation of sulfite from adenosine 5'-phosphosulfate (APS) using thioredoxin as an electron donor. This is Adenosine 5'-phosphosulfate reductase from Streptomyces coelicolor (strain ATCC BAA-471 / A3(2) / M145).